Consider the following 338-residue polypeptide: Ferredoxin--NADP reductase (338 aa).

The FAD site is built by aspartate 38, glutamine 46, tyrosine 51, valine 91, phenylalanine 125, aspartate 291, and threonine 331.

Belongs to the ferredoxin--NADP reductase type 2 family. Homodimer. The cofactor is FAD.

The catalysed reaction is 2 reduced [2Fe-2S]-[ferredoxin] + NADP(+) + H(+) = 2 oxidized [2Fe-2S]-[ferredoxin] + NADPH. In Orientia tsutsugamushi (strain Boryong) (Rickettsia tsutsugamushi), this protein is Ferredoxin--NADP reductase.